We begin with the raw amino-acid sequence, 358 residues long: Tyrosinase ustQ (358 aa).

Asparagine 28 carries N-linked (GlcNAc...) asparagine glycosylation. The chain crosses the membrane as a helical span at residues 37–57; that stretch reads FVPVYAGLTIISLITVTVSLV. N-linked (GlcNAc...) asparagine glycans are attached at residues asparagine 91 and asparagine 109. Residues histidine 128 and histidine 137 each coordinate Cu cation. N-linked (GlcNAc...) asparagine glycosylation is found at asparagine 172 and asparagine 214. Cu cation contacts are provided by histidine 266, histidine 270, and histidine 292. 2 N-linked (GlcNAc...) asparagine glycosylation sites follow: asparagine 321 and asparagine 325.

Belongs to the tyrosinase family. Cu(2+) serves as cofactor.

The protein resides in the membrane. The catalysed reaction is 2 L-dopa + O2 = 2 L-dopaquinone + 2 H2O. It carries out the reaction L-tyrosine + O2 = L-dopaquinone + H2O. It functions in the pathway mycotoxin biosynthesis. In terms of biological role, tyrosinase; part of the gene cluster that mediates the biosynthesis of the secondary metabolite ustiloxin B, an antimitotic tetrapeptide. First, ustA is processed by the subtilisin-like endoprotease Kex2 that is outside the ustiloxin B gene cluster, at the C-terminal side of Arg-Lys, after transfer to Golgi apparatus through the endoplasmic reticulum (ER). Cleavage by KEX2 generates 16 peptides YAIG-I to YAIG-XVI. To process the precursor peptide further, at least two peptidases are necessary to cleave the N-terminal and C-terminal sides of the Tyr-Ala-Ile-Gly core peptide which serves as backbone for the synthesis of ustiloxin B, through cyclization and modification of the tyrosine with a non-protein coding amino acid, norvaline. One of the two peptidases must be the serine peptidase ustP; and the other pepdidase is probably ustH. Macrocyclization of the core peptide derived from ustA requires the tyrosinase ustQ, as well as the homologous oxidases ustYa and ustYb, and leads to the production of the first cyclization product N-desmethylustiloxin F. For the formation of N-desmethylustiloxin F, three oxidation steps are required, hydroxylation at the benzylic position, hydroxylation at either the aromatic ring of Tyr or beta-position of Ile, and oxidative cyclization. UstQ may catalyze the oxidation of a phenol moiety, whereas the ustYa and ustYb are most likely responsible for the remaining two-step oxidations. N-desmethylustiloxin F is then methylated by ustM to yield ustiloxin F which in turn substrate of the cytochrome P450 monooxygenase ustC which catalyzes the formation of S-deoxyustiloxin H. The flavoprotein monooxygenases ustF1 and ustF2 then participate in the modification of the side chain of S-deoxyustiloxin H, leading to the synthesis of an oxime intermediate, via ustiloxin H. Finally, carboxylative dehydration performed by the cysteine desulfurase-like protein ustD yields ustiloxin B. In Aspergillus flavus (strain ATCC 200026 / FGSC A1120 / IAM 13836 / NRRL 3357 / JCM 12722 / SRRC 167), this protein is Tyrosinase ustQ.